We begin with the raw amino-acid sequence, 178 residues long: ATP synthase subunit b, chloroplastic (178 aa).

The chain crosses the membrane as a helical span at residues 34–50; that stretch reads LAILTGGIFYLGSNALS.

The protein belongs to the ATPase B chain family. In terms of assembly, F-type ATPases have 2 components, F(1) - the catalytic core - and F(0) - the membrane proton channel. F(1) has five subunits: alpha(3), beta(3), gamma(1), delta(1), epsilon(1). F(0) has four main subunits: a(1), b(1), b'(1) and c(10-14). The alpha and beta chains form an alternating ring which encloses part of the gamma chain. F(1) is attached to F(0) by a central stalk formed by the gamma and epsilon chains, while a peripheral stalk is formed by the delta, b and b' chains.

The protein resides in the plastid. The protein localises to the chloroplast thylakoid membrane. In terms of biological role, f(1)F(0) ATP synthase produces ATP from ADP in the presence of a proton or sodium gradient. F-type ATPases consist of two structural domains, F(1) containing the extramembraneous catalytic core and F(0) containing the membrane proton channel, linked together by a central stalk and a peripheral stalk. During catalysis, ATP synthesis in the catalytic domain of F(1) is coupled via a rotary mechanism of the central stalk subunits to proton translocation. Functionally, component of the F(0) channel, it forms part of the peripheral stalk, linking F(1) to F(0). The polypeptide is ATP synthase subunit b, chloroplastic (Ochrosphaera neapolitana).